The sequence spans 353 residues: Photosystem II protein D1 (353 aa).

An N-acetylthreonine modification is found at Thr-2. Thr-2 carries the phosphothreonine modification. 3 helical membrane passes run Tyr-29–Ser-46, His-118–Leu-133, and Trp-142–Ala-156. His-118 serves as a coordination point for chlorophyll a. Tyr-126 serves as a coordination point for pheophytin a. [CaMn4O5] cluster-binding residues include Asp-170 and Glu-189. Residues Phe-197–Leu-218 traverse the membrane as a helical segment. His-198 is a chlorophyll a binding site. A quinone is bound by residues His-215 and Ser-264–Phe-265. Position 215 (His-215) interacts with Fe cation. A Fe cation-binding site is contributed by His-272. A helical transmembrane segment spans residues Phe-274–Leu-288. Positions 332, 333, 342, and 344 each coordinate [CaMn4O5] cluster. A propeptide spanning residues Ala-345–Gly-353 is cleaved from the precursor.

This sequence belongs to the reaction center PufL/M/PsbA/D family. In terms of assembly, PSII is composed of 1 copy each of membrane proteins PsbA, PsbB, PsbC, PsbD, PsbE, PsbF, PsbH, PsbI, PsbJ, PsbK, PsbL, PsbM, PsbT, PsbX, PsbY, PsbZ, Psb30/Ycf12, at least 3 peripheral proteins of the oxygen-evolving complex and a large number of cofactors. It forms dimeric complexes. Requires The D1/D2 heterodimer binds P680, chlorophylls that are the primary electron donor of PSII, and subsequent electron acceptors. It shares a non-heme iron and each subunit binds pheophytin, quinone, additional chlorophylls, carotenoids and lipids. D1 provides most of the ligands for the Mn4-Ca-O5 cluster of the oxygen-evolving complex (OEC). There is also a Cl(-1) ion associated with D1 and D2, which is required for oxygen evolution. The PSII complex binds additional chlorophylls, carotenoids and specific lipids. as cofactor. Post-translationally, tyr-161 forms a radical intermediate that is referred to as redox-active TyrZ, YZ or Y-Z. C-terminally processed by CTPA; processing is essential to allow assembly of the oxygen-evolving complex and thus photosynthetic growth.

Its subcellular location is the plastid. The protein resides in the chloroplast thylakoid membrane. The catalysed reaction is 2 a plastoquinone + 4 hnu + 2 H2O = 2 a plastoquinol + O2. Its function is as follows. Photosystem II (PSII) is a light-driven water:plastoquinone oxidoreductase that uses light energy to abstract electrons from H(2)O, generating O(2) and a proton gradient subsequently used for ATP formation. It consists of a core antenna complex that captures photons, and an electron transfer chain that converts photonic excitation into a charge separation. The D1/D2 (PsbA/PsbD) reaction center heterodimer binds P680, the primary electron donor of PSII as well as several subsequent electron acceptors. This Lolium perenne (Perennial ryegrass) protein is Photosystem II protein D1.